Consider the following 392-residue polypeptide: Selenide, water dikinase 1 (392 aa).

Cys-31 is a catalytic residue. Residues Lys-32, 67-69 (GMD), Asp-87, Asp-110, and 161-164 (GGQT) each bind ATP. Asp-69 is a binding site for Mg(2+). Asp-110 is a Mg(2+) binding site. A Mg(2+)-binding site is contributed by Asp-265. The residue at position 387 (Thr-387) is a Phosphothreonine.

It belongs to the selenophosphate synthase 1 family. Class II subfamily. As to quaternary structure, homodimer. Requires Mg(2+) as cofactor.

The protein localises to the cell membrane. The protein resides in the nucleus membrane. The enzyme catalyses hydrogenselenide + ATP + H2O = selenophosphate + AMP + phosphate + 2 H(+). Its function is as follows. Synthesizes selenophosphate from selenide and ATP. The protein is Selenide, water dikinase 1 (sephs1) of Danio rerio (Zebrafish).